Reading from the N-terminus, the 239-residue chain is Norbelladine 4'-O-methyltransferase 5 (239 aa).

S-adenosyl-L-methionine-binding positions include valine 55, glutamate 77, 79–80 (GV), serine 85, aspartate 103, and alanine 132. Aspartate 155 is a binding site for a divalent metal cation. Aspartate 157 lines the S-adenosyl-L-methionine pocket. The a divalent metal cation site is built by aspartate 181 and asparagine 182.

It belongs to the class I-like SAM-binding methyltransferase superfamily. Cation-dependent O-methyltransferase family. It depends on Mg(2+) as a cofactor.

The catalysed reaction is norbelladine + S-adenosyl-L-methionine = 4'-O-methylnorbelladine + S-adenosyl-L-homocysteine + H(+). Its pathway is alkaloid biosynthesis. 4'-O-methyltransferase converting norbelladine to 4'-O-methylnorbelladine. 4'-O-methylnorbelladine is a precursor to all Amaryllidaceae alkaloids such as galanthamine, lycorine and haemanthamine, and including haemanthamine- and crinamine-type alkaloids, promising anticancer agents. The protein is Norbelladine 4'-O-methyltransferase 5 of Narcissus aff. pseudonarcissus MK-2014 (Daffodil).